A 417-amino-acid polypeptide reads, in one-letter code: MTHTKSEELFRRAVEKIPGGVNSPVRAFRSVGGQPVFIARGQGSHLFDVDGNEYIDYVGSWGPLILGHRHPEILAALERALEIGTSFGAPTEQEIDLADAIIDAVPSVEMVRLVNSGTEATMSAIRVARGFTGRDLVVKFEGCYHGHVDSLLVKAGSGMATLGIADTQGVPKAFADTTIPLPYNSLDALEEAFRAHGDRIAAVIVEPVVGNMGCVPPLPGYLEGMRAITERYGALLIFDEVMTGFRVAFGGAQQLYGIKPDLTTLGKVIGGGLPVGAYGGRKDIMSKVAPAGPIYQAGTLSGNPLAVAAGLAMLRHLKRNPQVYTRLEECGARLAAAAPKGVTVNRVGSMFTFFFTDGPVTDWESAKRCDTSRFGEFFRGMLDRGVYLAPSQFEAAFVGAAHSDEDIAKTIEAAKTA.

K267 bears the N6-(pyridoxal phosphate)lysine mark.

It belongs to the class-III pyridoxal-phosphate-dependent aminotransferase family. HemL subfamily. Homodimer. Requires pyridoxal 5'-phosphate as cofactor.

It is found in the cytoplasm. It catalyses the reaction (S)-4-amino-5-oxopentanoate = 5-aminolevulinate. It participates in porphyrin-containing compound metabolism; protoporphyrin-IX biosynthesis; 5-aminolevulinate from L-glutamyl-tRNA(Glu): step 2/2. The chain is Glutamate-1-semialdehyde 2,1-aminomutase from Solibacter usitatus (strain Ellin6076).